We begin with the raw amino-acid sequence, 76 residues long: Tautomerase PptA (76 aa).

Residue Pro-2 is the Proton acceptor; via imino nitrogen of the active site.

Belongs to the 4-oxalocrotonate tautomerase family. PptA subfamily. As to quaternary structure, homodimer.

It localises to the cytoplasm. This Pectobacterium carotovorum subsp. carotovorum (strain PC1) protein is Tautomerase PptA.